A 469-amino-acid chain; its full sequence is Argininosuccinate lyase (469 aa).

It belongs to the lyase 1 family. Argininosuccinate lyase subfamily.

It localises to the cytoplasm. The catalysed reaction is 2-(N(omega)-L-arginino)succinate = fumarate + L-arginine. Its pathway is amino-acid biosynthesis; L-arginine biosynthesis; L-arginine from L-ornithine and carbamoyl phosphate: step 3/3. The protein is Argininosuccinate lyase of Burkholderia thailandensis (strain ATCC 700388 / DSM 13276 / CCUG 48851 / CIP 106301 / E264).